Here is a 590-residue protein sequence, read N- to C-terminus: Muscarinic acetylcholine receptor M3 (590 aa).

At 1–67 (MTLHSNSTTS…DPLGGHTVWQ (67 aa)) the chain is on the extracellular side. N-linked (GlcNAc...) asparagine glycosylation is found at Asn-6, Asn-15, Asn-41, and Asn-48. The chain crosses the membrane as a helical span at residues 68 to 91 (VVFIAFLTGILALVTIIGNILVIV). Residues 92 to 104 (SFKVNKQLKTVNN) are Cytoplasmic-facing. Residues 105-130 (YFLLSLACADLIIGVISMNLFTTYII) form a helical membrane-spanning segment. The Extracellular segment spans residues 131–142 (MNRWALGNLACD). Cys-141 and Cys-221 are joined by a disulfide. A helical membrane pass occupies residues 143 to 164 (LWLAIDYVASNASVMNLLVISF). Residues 165-184 (DRYFSITRPLTYRAKRTTKR) lie on the Cytoplasmic side of the membrane. A helical transmembrane segment spans residues 185-206 (AGVMIGLAWVISFVLWAPAILF). Topologically, residues 207–229 (WQYFVGKRTVPPGECFIQFLSEP) are extracellular. Residues 230-252 (TITFGTAIAAFYMPVTIMTILYW) traverse the membrane as a helical segment. Residues 253 to 491 (RIYKETEKRT…SLVKEKKAAQ (239 aa)) lie on the Cytoplasmic side of the membrane. Positions 275–281 (AETENFV) match the Basolateral sorting signal motif. The interval 323–357 (SSEQMDQDHSSSDSWNNNDAAASLENSASSDEEDI) is disordered. Residues 334–345 (SDSWNNNDAAAS) show a composition bias toward low complexity. Ser-385 bears the Phosphoserine mark. A helical membrane pass occupies residues 492-514 (TLSAILLAFIITWTPYNIMVLVN). Topologically, residues 515–526 (TFCDSCIPKTFW) are extracellular. Cys-517 and Cys-520 are disulfide-bonded. A helical transmembrane segment spans residues 527–546 (NLGYWLCYINSTVNPVCYAL). The Cytoplasmic portion of the chain corresponds to 547–590 (CNKTFRTTFKMLLLCQCDKKKRRKQQYQQRQSVIFHKRAPEQAL).

It belongs to the G-protein coupled receptor 1 family. Muscarinic acetylcholine receptor subfamily. CHRM3 sub-subfamily. In terms of assembly, homodimer; the dimers can form tetramers. Interacts with NALCN. Interacts with TMEM147.

It localises to the cell membrane. The protein localises to the postsynaptic cell membrane. Its subcellular location is the basolateral cell membrane. The protein resides in the endoplasmic reticulum membrane. Functionally, the muscarinic acetylcholine receptor mediates various cellular responses, including inhibition of adenylate cyclase, breakdown of phosphoinositides and modulation of potassium channels through the action of G proteins. Primary transducing effect is Pi turnover. The protein is Muscarinic acetylcholine receptor M3 (CHRM3) of Pongo pygmaeus (Bornean orangutan).